The chain runs to 374 residues: MTSPALKDPAKTRVIVGMSGGVDSSVSALLLMEQGYQVEGLFMKNWEEDDGTEYCTAREDLADAQAVCDRIGIKLHTANFAAEYWDNVFEHFLEEYKAGRTPNPDILCNREIKFKAFLDYALSLGADLIATGHYVRRRDTGAVTELLKGLDPNKDQSYFLHAVGGKEIARTLFPVGELEKPEVRAIAEKHGLATAKKKDSTGICFIGERRFSDFLKQYLPAQPGEIQTTEGEVIGRHHGLMYHTIGQRQGLGIGGLKDAGDEPWYVLHKDLTRNVLVVGQGNEHPWLFSRALLASEIFWVNPIDLSSPRTLTAKVRYRQSDQRCTLALTESGYRAVFDEPQRAVTPGQSVVFYDGEVCLGGGVIETAEPWSPRA.

Residues 17–24 (GMSGGVDS) and M43 contribute to the ATP site. Residues 103 to 105 (NPD) are interaction with target base in tRNA. Catalysis depends on C108, which acts as the Nucleophile. C108 and C204 are disulfide-bonded. G132 lines the ATP pocket. The interaction with tRNA stretch occupies residues 154-156 (KDQ). The active-site Cysteine persulfide intermediate is the C204. The interval 316–317 (RY) is interaction with tRNA.

The protein belongs to the MnmA/TRMU family.

Its subcellular location is the cytoplasm. It carries out the reaction S-sulfanyl-L-cysteinyl-[protein] + uridine(34) in tRNA + AH2 + ATP = 2-thiouridine(34) in tRNA + L-cysteinyl-[protein] + A + AMP + diphosphate + H(+). Its function is as follows. Catalyzes the 2-thiolation of uridine at the wobble position (U34) of tRNA, leading to the formation of s(2)U34. The protein is tRNA-specific 2-thiouridylase MnmA of Pseudomonas putida (strain W619).